The primary structure comprises 496 residues: Docking protein 3 (496 aa).

Positions 18–38 (LSLDGGTGSGQKGKCEEFPSS) are disordered. The region spanning 63–179 (PIKDGILYQQ…WMGPICQLAF (117 aa)) is the PH domain. Phosphoserine is present on serine 194. The IRS-type PTB domain maps to 213 to 317 (EVGEFPVVVQ…ARQRERLPEL (105 aa)). The interval 313 to 363 (RLPELTRPQPCPLPRATSLPSLDTPGELREMPPGPEPPTSRKMHLAEPGPQ) is disordered. Serine 330 and serine 364 each carry phosphoserine. Tyrosine 381 carries the post-translational modification Phosphotyrosine. Residues 408–447 (PTLHGGEPEPHEGPGSRSPTTSPIYHNGQDLSWPGPANDS) are disordered. Serine 425 carries the post-translational modification Phosphoserine.

It belongs to the DOK family. Type A subfamily. As to quaternary structure, on tyrosine phosphorylation, interacts with CSK and INPP5D/SHIP1 via their SH2 domains. Both Tyr-381 and Tyr-398 are required for interaction with INPP5D. Only Tyr-381 is required for interaction with CSK. Binds ABL1 through the PTB domain and in a kinase-dependent manner. Does not interact with RasGAP. In terms of processing, constitutively tyrosine-phosphorylated. Post-translationally, on IL2 stimulation, phosphorylated on C-terminal tyrosine residues possibly by Src kinases. Can also be phosphorylated by ABL1 kinase. Expressed in spleen.

Its subcellular location is the cytoplasm. The protein localises to the cell membrane. Functionally, DOK proteins are enzymatically inert adaptor or scaffolding proteins. They provide a docking platform for the assembly of multimolecular signaling complexes. DOK3 is a negative regulator of JNK signaling in B-cells through interaction with INPP5D/SHIP1. May modulate ABL1 function. The polypeptide is Docking protein 3 (DOK3) (Homo sapiens (Human)).